The chain runs to 345 residues: Protein RecA (345 aa).

65–72 lines the ATP pocket; it reads GPESSGKT.

It belongs to the RecA family.

It is found in the cytoplasm. In terms of biological role, can catalyze the hydrolysis of ATP in the presence of single-stranded DNA, the ATP-dependent uptake of single-stranded DNA by duplex DNA, and the ATP-dependent hybridization of homologous single-stranded DNAs. It interacts with LexA causing its activation and leading to its autocatalytic cleavage. The chain is Protein RecA from Hahella chejuensis (strain KCTC 2396).